Consider the following 274-residue polypeptide: Dermonecrotic toxin SdSicTox-betaIIB1biii (274 aa).

The active site involves H5. Mg(2+) contacts are provided by E25 and D27. The active-site Nucleophile is H41. Intrachain disulfides connect C45/C51 and C47/C190. D85 serves as a coordination point for Mg(2+).

Belongs to the arthropod phospholipase D family. Class II subfamily. It depends on Mg(2+) as a cofactor. As to expression, expressed by the venom gland.

It localises to the secreted. It catalyses the reaction an N-(acyl)-sphingosylphosphocholine = an N-(acyl)-sphingosyl-1,3-cyclic phosphate + choline. The enzyme catalyses an N-(acyl)-sphingosylphosphoethanolamine = an N-(acyl)-sphingosyl-1,3-cyclic phosphate + ethanolamine. The catalysed reaction is a 1-acyl-sn-glycero-3-phosphocholine = a 1-acyl-sn-glycero-2,3-cyclic phosphate + choline. It carries out the reaction a 1-acyl-sn-glycero-3-phosphoethanolamine = a 1-acyl-sn-glycero-2,3-cyclic phosphate + ethanolamine. In terms of biological role, dermonecrotic toxins cleave the phosphodiester linkage between the phosphate and headgroup of certain phospholipids (sphingolipid and lysolipid substrates), forming an alcohol (often choline) and a cyclic phosphate. This toxin acts on sphingomyelin (SM). It may also act on ceramide phosphoethanolamine (CPE), lysophosphatidylcholine (LPC) and lysophosphatidylethanolamine (LPE), but not on lysophosphatidylserine (LPS), and lysophosphatidylglycerol (LPG). It acts by transphosphatidylation, releasing exclusively cyclic phosphate products as second products. Induces dermonecrosis, hemolysis, increased vascular permeability, edema, inflammatory response, and platelet aggregation. In Sicarius cf. damarensis (strain GJB-2008) (Six-eyed sand spider), this protein is Dermonecrotic toxin SdSicTox-betaIIB1biii.